The following is a 361-amino-acid chain: Chitinase-3-like protein 1 (361 aa).

In terms of domain architecture, GH18 spans 1-361 (YKLICYYTSW…SAVKDVLAEV (361 aa)). Cys-5 and Cys-30 are disulfide-bonded. Residue Asn-39 is glycosylated (N-linked (GlcNAc...) asparagine). Chitin contacts are provided by residues 49-50 (EW), 76-79 (GGWN), Tyr-120, 183-186 (LTYD), and Arg-241. Residues Cys-278 and Cys-342 are joined by a disulfide bond. The important for AKT1 activation and IL8 production stretch occupies residues 302-316 (QWVAYDDQESVKNKA). Chitin is bound at residue Trp-330. Asn-345 carries an N-linked (GlcNAc...) asparagine glycan.

Belongs to the glycosyl hydrolase 18 family. Monomer. Detected in mammary gland.

Its subcellular location is the secreted. It is found in the extracellular space. The protein localises to the cytoplasm. The protein resides in the perinuclear region. It localises to the endoplasmic reticulum. Functionally, carbohydrate-binding lectin with a preference for chitin. Has no chitinase activity. May play a role in tissue remodeling and in the capacity of cells to respond to and cope with changes in their environment. Plays a role in T-helper cell type 2 (Th2) inflammatory response and IL-13-induced inflammation, regulating allergen sensitization, inflammatory cell apoptosis, dendritic cell accumulation and M2 macrophage differentiation. Facilitates invasion of pathogenic enteric bacteria into colonic mucosa and lymphoid organs. Mediates activation of AKT1 signaling pathway and subsequent IL8 production in colonic epithelial cells. Regulates antibacterial responses in lung by contributing to macrophage bacterial killing, controlling bacterial dissemination and augmenting host tolerance. Also regulates hyperoxia-induced injury, inflammation and epithelial apoptosis in lung. The sequence is that of Chitinase-3-like protein 1 (CHI3L1) from Ovis aries (Sheep).